The sequence spans 137 residues: MLQPKRTKFRKVHKGRNTGLAHRGSTVSFGSIAIKATERGRMTARQIEAARRTISRRIKRGGKIFIRVFPDKPITEKPLEVRMGNGKGNVEYWVCEIKPGKILYEIEGVNEDLAREAFALAAAKLPFKTTIVTRTVM.

This sequence belongs to the universal ribosomal protein uL16 family. Part of the 50S ribosomal subunit.

In terms of biological role, binds 23S rRNA and is also seen to make contacts with the A and possibly P site tRNAs. The chain is Large ribosomal subunit protein uL16 from Acinetobacter baumannii (strain AB307-0294).